The chain runs to 812 residues: Hyaluronate lyase HylB (812 aa).

Residues 1 to 32 (MFGTPSRRTFLTASALSAMALAASPTVTDAIA) constitute a signal peptide (tat-type signal). Residues N222, H272, and Y281 contribute to the active site.

This sequence belongs to the polysaccharide lyase 8 family. Post-translationally, predicted to be exported by the Tat system. The position of the signal peptide cleavage has been experimentally proven.

It localises to the secreted. The enzyme catalyses [hyaluronan](n) = n 3-(4-deoxy-beta-D-gluc-4-enuronosyl)-N-acetyl-D-glucosamine + H2O. Degrades hyaluronic acid (HA) exclusively into HA disaccharides (HA-2). Produced HA-2s confer anti-inflammatory properties leading to reduced immunopathology in the mouse model of acne. This Cutibacterium acnes (Propionibacterium acnes) protein is Hyaluronate lyase HylB.